A 579-amino-acid chain; its full sequence is Probable N-acetylgalactosaminyltransferase 9 (579 aa).

The Cytoplasmic segment spans residues 1–12; that stretch reads MLRYIIPRKKGT. A helical; Signal-anchor for type II membrane protein transmembrane segment spans residues 13-30; that stretch reads FVIAAFLTVAFFCIVAYH. Residues 31-579 lie on the Lumenal side of the membrane; it reads RNDRRRTKFQ…KWNFIDPAKA (549 aa). Asn-67 is a glycosylation site (N-linked (GlcNAc...) asparagine). 5 cysteine pairs are disulfide-bonded: Cys-123/Cys-356, Cys-347/Cys-427, Cys-464/Cys-483, Cys-507/Cys-520, and Cys-545/Cys-562. A catalytic subdomain A region spans residues 133 to 243; the sequence is LPKTSVIIIF…HGWLEPIVQR (111 aa). Substrate-binding residues include Asp-174 and Arg-204. Asp-227 is a binding site for Mn(2+). Ser-228 is a substrate binding site. His-229 contributes to the Mn(2+) binding site. The tract at residues 302–364 is catalytic subdomain B; it reads YIRSPTMAGG…PCSHVGHIFR (63 aa). Substrate is bound at residue Trp-333. Residue His-361 coordinates Mn(2+). Positions 364, 367, and 369 each coordinate substrate. N-linked (GlcNAc...) asparagine glycosylation is present at Asn-370. Positions 450-574 constitute a Ricin B-type lectin domain; the sequence is AYGALHTVVS…KDEHQKWNFI (125 aa).

It belongs to the glycosyltransferase 2 family. GalNAc-T subfamily. The cofactor is Mn(2+).

The protein localises to the golgi apparatus membrane. It functions in the pathway protein modification; protein glycosylation. Functionally, probable glycopeptide transferase involved in O-linked oligosaccharide biosynthesis. Glycopeptide transferases catalyze the transfer of an N-acetyl-D-galactosamine residue to an already glycosylated peptide. In contrast to other members of the family, it does not act as a peptide transferase that transfers GalNAc onto serine or threonine residue on peptides that have been tested. Some peptide transferase activity is however not excluded, considering that its appropriate peptide substrate may remain unidentified. The sequence is that of Probable N-acetylgalactosaminyltransferase 9 (gly-9) from Caenorhabditis elegans.